The chain runs to 619 residues: 1-deoxy-D-xylulose-5-phosphate synthase (619 aa).

Residues His74 and 115 to 117 (GHS) each bind thiamine diphosphate. Position 146 (Asp146) interacts with Mg(2+). Thiamine diphosphate is bound by residues 147–148 (GA), Asn175, Tyr285, and Glu365. Asn175 provides a ligand contact to Mg(2+).

The protein belongs to the transketolase family. DXPS subfamily. As to quaternary structure, homodimer. The cofactor is Mg(2+). Thiamine diphosphate serves as cofactor.

The enzyme catalyses D-glyceraldehyde 3-phosphate + pyruvate + H(+) = 1-deoxy-D-xylulose 5-phosphate + CO2. Its pathway is metabolic intermediate biosynthesis; 1-deoxy-D-xylulose 5-phosphate biosynthesis; 1-deoxy-D-xylulose 5-phosphate from D-glyceraldehyde 3-phosphate and pyruvate: step 1/1. Catalyzes the acyloin condensation reaction between C atoms 2 and 3 of pyruvate and glyceraldehyde 3-phosphate to yield 1-deoxy-D-xylulose-5-phosphate (DXP). This chain is 1-deoxy-D-xylulose-5-phosphate synthase, found in Clostridium perfringens (strain SM101 / Type A).